A 135-amino-acid polypeptide reads, in one-letter code: MAVILKHLAIILLVFVIEIKMGQGSQIERRSSGVTHEMLSSISKPEKRFAFEDTVANERSPQITFSTDWGQRKRSVNEDREAAERERSPQMKRSEHEEQLMAKDEMKRFQEERNPSSDDKIAIDKRSPRYLPTII.

Residues 1 to 24 (MAVILKHLAIILLVFVIEIKMGQG) form the signal peptide. The segment at 61-135 (PQITFSTDWG…RSPRYLPTII (75 aa)) is disordered. Residues 75-127 (SVNEDREAAERERSPQMKRSEHEEQLMAKDEMKRFQEERNPSSDDKIAIDKRS) are compositionally biased toward basic and acidic residues.

This sequence belongs to the scoloptoxin-22 family. In terms of tissue distribution, expressed by the venom gland.

It localises to the secreted. The polypeptide is U-scoloptoxin(22)-Er1a (Ethmostigmus rubripes (Giant centipede)).